A 141-amino-acid chain; its full sequence is Large ribosomal subunit protein uL11 (141 aa).

The protein belongs to the universal ribosomal protein uL11 family. As to quaternary structure, part of the ribosomal stalk of the 50S ribosomal subunit. Interacts with L10 and the large rRNA to form the base of the stalk. L10 forms an elongated spine to which L12 dimers bind in a sequential fashion forming a multimeric L10(L12)X complex. One or more lysine residues are methylated.

In terms of biological role, forms part of the ribosomal stalk which helps the ribosome interact with GTP-bound translation factors. The sequence is that of Large ribosomal subunit protein uL11 from Fusobacterium nucleatum subsp. nucleatum (strain ATCC 25586 / DSM 15643 / BCRC 10681 / CIP 101130 / JCM 8532 / KCTC 2640 / LMG 13131 / VPI 4355).